The sequence spans 255 residues: 5-oxoprolinase subunit A 2 (255 aa).

It belongs to the LamB/PxpA family. Forms a complex composed of PxpA, PxpB and PxpC.

The catalysed reaction is 5-oxo-L-proline + ATP + 2 H2O = L-glutamate + ADP + phosphate + H(+). Catalyzes the cleavage of 5-oxoproline to form L-glutamate coupled to the hydrolysis of ATP to ADP and inorganic phosphate. This Agrobacterium fabrum (strain C58 / ATCC 33970) (Agrobacterium tumefaciens (strain C58)) protein is 5-oxoprolinase subunit A 2.